Here is a 290-residue protein sequence, read N- to C-terminus: Probable porphobilinogen deaminase (290 aa).

The residue at position 230 (Cys-230) is an S-(dipyrrolylmethanemethyl)cysteine.

Belongs to the HMBS family. It depends on dipyrromethane as a cofactor.

It catalyses the reaction 4 porphobilinogen + H2O = hydroxymethylbilane + 4 NH4(+). The protein operates within porphyrin-containing compound metabolism; protoporphyrin-IX biosynthesis; coproporphyrinogen-III from 5-aminolevulinate: step 2/4. In terms of biological role, tetrapolymerization of the monopyrrole PBG into the hydroxymethylbilane pre-uroporphyrinogen in several discrete steps. In Metallosphaera sedula (strain ATCC 51363 / DSM 5348 / JCM 9185 / NBRC 15509 / TH2), this protein is Probable porphobilinogen deaminase.